Reading from the N-terminus, the 220-residue chain is Phosphopantothenoylcysteine decarboxylase (220 aa).

Residues 29–31 (GSV) and 54–56 (TKA) contribute to the FMN site. Histidine 91 functions as the Proton donor in the catalytic mechanism. FMN is bound by residues 107–110 (SANT) and alanine 141. 3 residues coordinate N-[(R)-4-phosphopantothenoyl]-L-cysteine: asparagine 143, arginine 173, and alanine 175. The active-site Proton donor is the cysteine 176. Residue methionine 184 coordinates N-[(R)-4-phosphopantothenoyl]-L-cysteine.

It belongs to the HFCD (homooligomeric flavin containing Cys decarboxylase) superfamily. As to quaternary structure, forms homotrimers. Interacts with HIP1. Interacts with HD1 in the dark. The cofactor is FMN. As to expression, expressed in root meristem, shoot apical meristem (SAM), intercalary meristem, floral meristem, embryo and tip of the coleoptile before true leaf emergence.

It localises to the nucleus. The enzyme catalyses N-[(R)-4-phosphopantothenoyl]-L-cysteine + H(+) = (R)-4'-phosphopantetheine + CO2. The protein operates within cofactor biosynthesis; coenzyme A biosynthesis; CoA from (R)-pantothenate: step 3/5. In terms of biological role, catalyzes the decarboxylation of 4'-phosphopantothenoylcysteine to 4'-phosphopantetheine, a key step in coenzyme A biosynthesis. Involved in salt and osmotic tolerance, and light-regulated plant growth. Trimerization of HAL3 recruits and activates the E3 ubiquitin-protein ligase HIP1, which leads to the degradation of cell cycle suppressors, resulting in enhancement of cell division and plant growth. HAL3 function in cell division seems to be independent from its PPC decarboxylase activity. Acts as a positive regulator of flowering by binding to HD1 in the dark. The protein is Phosphopantothenoylcysteine decarboxylase of Oryza sativa subsp. japonica (Rice).